A 1090-amino-acid polypeptide reads, in one-letter code: UPF0507 protein C1Q_01007 (1090 aa).

Residues 289 to 436 (FSVNQLLTDF…FEDFNKNTGN (148 aa)) enclose the VPS9 domain.

It belongs to the UPF0507 family.

The sequence is that of UPF0507 protein C1Q_01007 from Saccharomyces cerevisiae (strain JAY291) (Baker's yeast).